We begin with the raw amino-acid sequence, 386 residues long: Dual-specificity RNA methyltransferase RlmN (386 aa).

Residue E94 is the Proton acceptor of the active site. The 242-residue stretch at 100 to 341 (EENRGTLCIS…VTTIRKTRGD (242 aa)) folds into the Radical SAM core domain. The cysteines at positions 107 and 347 are disulfide-linked. The [4Fe-4S] cluster site is built by C114, C118, and C121. Residues 173–174 (GE), S205, 227–229 (SLH), and N304 each bind S-adenosyl-L-methionine. The active-site S-methylcysteine intermediate is C347.

It belongs to the radical SAM superfamily. RlmN family. Requires [4Fe-4S] cluster as cofactor.

It is found in the cytoplasm. The catalysed reaction is adenosine(2503) in 23S rRNA + 2 reduced [2Fe-2S]-[ferredoxin] + 2 S-adenosyl-L-methionine = 2-methyladenosine(2503) in 23S rRNA + 5'-deoxyadenosine + L-methionine + 2 oxidized [2Fe-2S]-[ferredoxin] + S-adenosyl-L-homocysteine. It carries out the reaction adenosine(37) in tRNA + 2 reduced [2Fe-2S]-[ferredoxin] + 2 S-adenosyl-L-methionine = 2-methyladenosine(37) in tRNA + 5'-deoxyadenosine + L-methionine + 2 oxidized [2Fe-2S]-[ferredoxin] + S-adenosyl-L-homocysteine. Specifically methylates position 2 of adenine 2503 in 23S rRNA and position 2 of adenine 37 in tRNAs. m2A2503 modification seems to play a crucial role in the proofreading step occurring at the peptidyl transferase center and thus would serve to optimize ribosomal fidelity. The protein is Dual-specificity RNA methyltransferase RlmN of Herminiimonas arsenicoxydans.